We begin with the raw amino-acid sequence, 149 residues long: NADH-quinone oxidoreductase subunit A (149 aa).

3 helical membrane passes run 16-36 (FGIF…GAWF), 68-88 (FYLV…LFAW), and 98-118 (LGFI…VYLV).

The protein belongs to the complex I subunit 3 family. In terms of assembly, NDH-1 is composed of 13 different subunits. Subunits NuoA, H, J, K, L, M, N constitute the membrane sector of the complex.

It localises to the cell inner membrane. It catalyses the reaction a quinone + NADH + 5 H(+)(in) = a quinol + NAD(+) + 4 H(+)(out). In terms of biological role, NDH-1 shuttles electrons from NADH, via FMN and iron-sulfur (Fe-S) centers, to quinones in the respiratory chain. The immediate electron acceptor for the enzyme in this species is believed to be ubiquinone. Couples the redox reaction to proton translocation (for every two electrons transferred, four hydrogen ions are translocated across the cytoplasmic membrane), and thus conserves the redox energy in a proton gradient. The protein is NADH-quinone oxidoreductase subunit A of Cronobacter sakazakii (strain ATCC BAA-894) (Enterobacter sakazakii).